Here is a 165-residue protein sequence, read N- to C-terminus: UPF0303 protein Bphy_1660 (165 aa).

This sequence belongs to the UPF0303 family.

The chain is UPF0303 protein Bphy_1660 from Paraburkholderia phymatum (strain DSM 17167 / CIP 108236 / LMG 21445 / STM815) (Burkholderia phymatum).